We begin with the raw amino-acid sequence, 202 residues long: GTP cyclohydrolase 1 (202 aa).

Residues cysteine 90, histidine 93, and cysteine 163 each contribute to the Zn(2+) site.

This sequence belongs to the GTP cyclohydrolase I family. In terms of assembly, homomer.

It carries out the reaction GTP + H2O = 7,8-dihydroneopterin 3'-triphosphate + formate + H(+). The protein operates within cofactor biosynthesis; 7,8-dihydroneopterin triphosphate biosynthesis; 7,8-dihydroneopterin triphosphate from GTP: step 1/1. In Mycolicibacterium gilvum (strain PYR-GCK) (Mycobacterium gilvum (strain PYR-GCK)), this protein is GTP cyclohydrolase 1.